Reading from the N-terminus, the 409-residue chain is Dual-specificity RNA methyltransferase RlmN (409 aa).

Catalysis depends on glutamate 126, which acts as the Proton acceptor. In terms of domain architecture, Radical SAM core spans 132 to 373 (EEGRGTLCLS…NQAGYASPIR (242 aa)). The cysteines at positions 139 and 384 are disulfide-linked. [4Fe-4S] cluster is bound by residues cysteine 146, cysteine 150, and cysteine 153. Residues 210-211 (GE), serine 242, 264-266 (SLH), and asparagine 341 contribute to the S-adenosyl-L-methionine site. The active-site S-methylcysteine intermediate is the cysteine 384.

This sequence belongs to the radical SAM superfamily. RlmN family. [4Fe-4S] cluster is required as a cofactor.

Its subcellular location is the cytoplasm. It catalyses the reaction adenosine(2503) in 23S rRNA + 2 reduced [2Fe-2S]-[ferredoxin] + 2 S-adenosyl-L-methionine = 2-methyladenosine(2503) in 23S rRNA + 5'-deoxyadenosine + L-methionine + 2 oxidized [2Fe-2S]-[ferredoxin] + S-adenosyl-L-homocysteine. The catalysed reaction is adenosine(37) in tRNA + 2 reduced [2Fe-2S]-[ferredoxin] + 2 S-adenosyl-L-methionine = 2-methyladenosine(37) in tRNA + 5'-deoxyadenosine + L-methionine + 2 oxidized [2Fe-2S]-[ferredoxin] + S-adenosyl-L-homocysteine. Its function is as follows. Specifically methylates position 2 of adenine 2503 in 23S rRNA and position 2 of adenine 37 in tRNAs. m2A2503 modification seems to play a crucial role in the proofreading step occurring at the peptidyl transferase center and thus would serve to optimize ribosomal fidelity. The polypeptide is Dual-specificity RNA methyltransferase RlmN (Bartonella quintana (strain Toulouse) (Rochalimaea quintana)).